The sequence spans 407 residues: Probable beta-1,3-galactosyltransferase 4 (407 aa).

Residues 23-39 (WTLFLCIGFFCAGILFS) traverse the membrane as a helical; Signal-anchor for type II membrane protein segment.

This sequence belongs to the glycosyltransferase 31 family. It depends on Mn(2+) as a cofactor.

The protein resides in the golgi apparatus membrane. It participates in protein modification; protein glycosylation. In terms of biological role, beta-1,3-galactosyltransferase that transfers galactose from UDP-galactose to substrates with a terminal glycosyl residue. The chain is Probable beta-1,3-galactosyltransferase 4 (B3GALT4) from Arabidopsis thaliana (Mouse-ear cress).